Consider the following 78-residue polypeptide: D-alanyl carrier protein (78 aa).

The region spanning 1 to 78 is the Carrier domain; the sequence is MDFKQEVLDV…NIVNQLSELK (78 aa). Ser-36 carries the O-(pantetheine 4'-phosphoryl)serine modification.

This sequence belongs to the DltC family. Post-translationally, 4'-phosphopantetheine is transferred from CoA to a specific serine of apo-DCP.

It localises to the cytoplasm. Its pathway is cell wall biogenesis; lipoteichoic acid biosynthesis. In terms of biological role, carrier protein involved in the D-alanylation of lipoteichoic acid (LTA). The loading of thioester-linked D-alanine onto DltC is catalyzed by D-alanine--D-alanyl carrier protein ligase DltA. The DltC-carried D-alanyl group is further transferred to cell membrane phosphatidylglycerol (PG) by forming an ester bond, probably catalyzed by DltD. D-alanylation of LTA plays an important role in modulating the properties of the cell wall in Gram-positive bacteria, influencing the net charge of the cell wall. The sequence is that of D-alanyl carrier protein from Bacillus subtilis (strain 168).